A 159-amino-acid polypeptide reads, in one-letter code: Histone H2A (159 aa).

Positions 1 to 10 (MDSTGTGAGG) are enriched in gly residues. Disordered stretches follow at residues 1–31 (MDST…SVSR) and 133–159 (KTAE…PKKA). 2 stretches are compositionally biased toward basic residues: residues 11–29 (KGKK…KKSV) and 149–159 (PKKAAKSPKKA). 2 short sequence motifs (SPKK motif) span residues 148–151 (SPKK) and 155–158 (SPKK).

The protein belongs to the histone H2A family. The nucleosome is a histone octamer containing two molecules each of H2A, H2B, H3 and H4 assembled in one H3-H4 heterotetramer and two H2A-H2B heterodimers. The octamer wraps approximately 147 bp of DNA.

It is found in the nucleus. Its subcellular location is the chromosome. Core component of nucleosome. Nucleosomes wrap and compact DNA into chromatin, limiting DNA accessibility to the cellular machineries which require DNA as a template. Histones thereby play a central role in transcription regulation, DNA repair, DNA replication and chromosomal stability. DNA accessibility is regulated via a complex set of post-translational modifications of histones, also called histone code, and nucleosome remodeling. This is Histone H2A from Zea mays (Maize).